Consider the following 712-residue polypeptide: Probable metal-nicotianamine transporter YSL11 (712 aa).

Positions 25 to 48 (RRNTTAAARGNAGEEEEEAEAVAP) are disordered. The next 14 membrane-spanning stretches (helical) occupy residues 70-90 (AFVV…KLSL), 93-113 (GVIP…VRLW), 138-158 (CVVS…LFGM), 180-200 (LGWI…ALVP), 242-262 (LGKY…YTAG), 300-320 (IVNV…WPLI), 345-365 (VFIT…KVFG), 418-438 (VAIG…PLII), 446-466 (ILIA…GSGL), 478-498 (LAIF…LVGL), 532-552 (FVSQ…VFWL), 593-613 (LTLC…KDLV), 631-651 (FYLG…LYFW), and 666-686 (VASG…VLSL).

Belongs to the YSL (TC 2.A.67.2) family.

It localises to the membrane. Functionally, may be involved in the transport of nicotianamine-chelated metals. In Oryza sativa subsp. japonica (Rice), this protein is Probable metal-nicotianamine transporter YSL11 (YSL11).